Here is a 177-residue protein sequence, read N- to C-terminus: Protein TERMINAL FLOWER 1 (177 aa).

The protein belongs to the phosphatidylethanolamine-binding protein family. Expressed below the apical dome of inflorescence and coflorescence meristems, and in inflorescence stem.

It localises to the cytoplasm. Controls inflorescence meristem identity and is required for maintenance of an indeterminate inflorescence. Prevents the expression of 'APETALA1' and 'LEAFY'. Also plays a role in the regulation of the time of flowering in the long-day flowering pathway. May form complexes with phosphorylated ligands by interfering with kinases and their effectors. The protein is Protein TERMINAL FLOWER 1 (TFL1) of Arabidopsis thaliana (Mouse-ear cress).